Here is a 221-residue protein sequence, read N- to C-terminus: Histone H1C (221 aa).

2 stretches are compositionally biased toward low complexity: residues 1–11 and 27–44; these read MTETAATETTP and KKAA…PSAS. 2 disordered regions span residues 1 to 44 and 123 to 221; these read MTET…PSAS and AKKK…AAKK. One can recognise an H15 domain in the interval 39 to 112; sequence SGPSASELIV…GASGSFKLNK (74 aa). 2 stretches are compositionally biased toward basic residues: residues 123–150 and 158–221; these read AKKK…KPKK and SPKK…AAKK.

It belongs to the histone H1/H5 family.

The protein localises to the nucleus. It is found in the chromosome. Its function is as follows. Histones H1 are necessary for the condensation of nucleosome chains into higher-order structures. In Xenopus laevis (African clawed frog), this protein is Histone H1C.